The chain runs to 508 residues: MKYRDLRDFIAALEARGELTRVTAEVDPYLEITEICDRTLRAGGPALLFENVKGHAMPLLGNLFGTPERVALGMGQDSTAALREVGELLAFLKEPEPPKGFRDAWEKLPIFKQAMSMGPKTLRKAPCQEVILEGDDVDLDRLPIQHCWPGDVAPLVTWSLVVTKGPNKTRQNLGIYRQQKLGKNRLIMRWLSHRGGALDFQEWQSAHPGEPFPVAVALGADPATILGAVTPVPDNLSEYAFAGLLRGSRTELVKCGHADLEVPASSEIVLEGYIYPDDTAPEGPYGDHTGYYNEVETFPVFTVERITHRRDPIYHSTYTGRPPDEPAILGLALNEVFVPILRKQFPEIVDFYLPPEGCSYRMAVVTMKKQYPGHAKRVMMGVWSFLRQFMYTKFVIVLDDDVDARNWEDVIWAITTRMDPARDTVMVENTPIDYLDFASPTAGLGSKMGLDATTKWAGETQREWGTPIVMDEAVKRRVDERWGEYGIATPPPPPRHSPPSDERGHDDV.

Residue Asn172 participates in Mn(2+) binding. Prenylated FMN is bound by residues 175–177 (IYR), 189–191 (RWL), and 194–195 (RG). A Mn(2+)-binding site is contributed by Glu238. Catalysis depends on Asp287, which acts as the Proton donor. Residues 483–508 (GEYGIATPPPPPRHSPPSDERGHDDV) are disordered. Positions 498–508 (PPSDERGHDDV) are enriched in basic and acidic residues.

It belongs to the UbiD family. In terms of assembly, homohexamer. The cofactor is prenylated FMN. Mn(2+) serves as cofactor.

The protein resides in the cell membrane. The catalysed reaction is a 4-hydroxy-3-(all-trans-polyprenyl)benzoate + H(+) = a 2-(all-trans-polyprenyl)phenol + CO2. It participates in cofactor biosynthesis; ubiquinone biosynthesis. Its function is as follows. Catalyzes the decarboxylation of 3-octaprenyl-4-hydroxy benzoate to 2-octaprenylphenol, an intermediate step in ubiquinone biosynthesis. This chain is 3-octaprenyl-4-hydroxybenzoate carboxy-lyase, found in Chromohalobacter salexigens (strain ATCC BAA-138 / DSM 3043 / CIP 106854 / NCIMB 13768 / 1H11).